Reading from the N-terminus, the 276-residue chain is MSFFETLADRIEATDSVVSVGLDPDPNRLPEFLANADLPRWAFNRRIIDATHEHAACYKPNAAFYEDADGWRALEETIAYAHGKDVPVLLDAKRADIGNTTRQYAAALDRADAITVNPYLGRDSLQPFLDREEKGVFVLCRTSNPGGSDLQDLELASGEPLYERVAALADVWNGNDNVGLVVGATAPEELAEVREIVPEIPFLVPGVGAQGGDAEAAVEHGLADRPDAAVDVGLVNSSRGIIFAGEESSRPDDEATYFGAAGDAAKRLKKRLNQYR.

Lys93 functions as the Proton donor in the catalytic mechanism.

It belongs to the OMP decarboxylase family. Type 2 subfamily.

It catalyses the reaction orotidine 5'-phosphate + H(+) = UMP + CO2. Its pathway is pyrimidine metabolism; UMP biosynthesis via de novo pathway; UMP from orotate: step 2/2. This Halorubrum lacusprofundi (strain ATCC 49239 / DSM 5036 / JCM 8891 / ACAM 34) protein is Orotidine 5'-phosphate decarboxylase.